Consider the following 292-residue polypeptide: ATP synthase gamma chain (292 aa).

It belongs to the ATPase gamma chain family. In terms of assembly, F-type ATPases have 2 components, CF(1) - the catalytic core - and CF(0) - the membrane proton channel. CF(1) has five subunits: alpha(3), beta(3), gamma(1), delta(1), epsilon(1). CF(0) has three main subunits: a, b and c.

Its subcellular location is the cell inner membrane. Its function is as follows. Produces ATP from ADP in the presence of a proton gradient across the membrane. The gamma chain is believed to be important in regulating ATPase activity and the flow of protons through the CF(0) complex. The sequence is that of ATP synthase gamma chain from Rhodopseudomonas palustris (strain BisB18).